The sequence spans 129 residues: Glycine cleavage system H protein (129 aa).

The Lipoyl-binding domain occupies 24 to 106; it reads SYTVGITEHA…YGDGWFFRIM (83 aa). Lysine 65 is modified (N6-lipoyllysine).

This sequence belongs to the GcvH family. In terms of assembly, the glycine cleavage system is composed of four proteins: P, T, L and H. (R)-lipoate serves as cofactor.

Its function is as follows. The glycine cleavage system catalyzes the degradation of glycine. The H protein shuttles the methylamine group of glycine from the P protein to the T protein. The chain is Glycine cleavage system H protein from Shewanella denitrificans (strain OS217 / ATCC BAA-1090 / DSM 15013).